The primary structure comprises 429 residues: Adenylosuccinate synthetase (429 aa).

Residues 13 to 19 and 41 to 43 contribute to the GTP site; these read GDEGKGK and GHT. The active-site Proton acceptor is Asp-14. Mg(2+) contacts are provided by Asp-14 and Gly-41. IMP contacts are provided by residues 14–17, 39–42, Thr-130, Arg-144, Gln-225, Thr-240, and Arg-304; these read DEGK and NAGH. His-42 functions as the Proton donor in the catalytic mechanism. A substrate-binding site is contributed by 300–306; the sequence is ATTGRAR. Residues Arg-306, 332–334, and 413–415 each bind GTP; these read KLD and STG.

This sequence belongs to the adenylosuccinate synthetase family. Homodimer. It depends on Mg(2+) as a cofactor.

It is found in the cytoplasm. The enzyme catalyses IMP + L-aspartate + GTP = N(6)-(1,2-dicarboxyethyl)-AMP + GDP + phosphate + 2 H(+). It participates in purine metabolism; AMP biosynthesis via de novo pathway; AMP from IMP: step 1/2. Its function is as follows. Plays an important role in the de novo pathway of purine nucleotide biosynthesis. Catalyzes the first committed step in the biosynthesis of AMP from IMP. In Pseudomonas fluorescens (strain Pf0-1), this protein is Adenylosuccinate synthetase.